A 174-amino-acid polypeptide reads, in one-letter code: Large ribosomal subunit protein uL15 (174 aa).

Disordered regions lie at residues 1-56 (MKLH…GQMR) and 150-174 (VERRSRSRGPNPPRHHRKAEATPGA). A compositionally biased stretch (gly residues) spans 21 to 35 (RGIGSGKGKTGGKGM).

The protein belongs to the universal ribosomal protein uL15 family. Part of the 50S ribosomal subunit.

In terms of biological role, binds to the 23S rRNA. This Roseiflexus castenholzii (strain DSM 13941 / HLO8) protein is Large ribosomal subunit protein uL15.